The following is a 510-amino-acid chain: MKEEVLGLPIEKIQEKIKEYDFSPRISNIGYVKSVGDGVAQVSLLNAAFVGEIVIFESGIQGMVLSLKEDSVGVILFGRDEYVKEGEVVYSTGKILQVPTGSGFLGRVIDPLGNPIDGGGLIFPEAYVPVDNEAPSIFDREPVKEPLYTGIRAIDALIPIGHGQRELILGDRQTGKTTIAIDTIISQRNYGTICIYVAIAQKRTNIARIVQTLREYGALSNTIVIATFPDDPPALRYIAPMAGCAMGEYFMRQGERVLIVYDDLTKHANTYREVALLLRRVPGREAYPGDIFYLHSHLLERAAKLSRKLGGGALTALPIAETLAGEISTYIPTNLISITDGQIYLDTALFNAGVRPAINVGLSVSRVGGSAQPKGMRQVAGRLRLDLAQYREYAMFLEFGTELDMATKKKIERGRRIEELLKQGAHEVQSVEEQIITFYLANGGFLDNYPVEKVKDVVIKYIAYLKLKYSSVLTLLREQLELSDQIIYQIHNIFQEFEREVYANPSNPQA.

An ATP-binding site is contributed by G170–T177.

This sequence belongs to the ATPase alpha/beta chains family. F-type ATPases have 2 components, CF(1) - the catalytic core - and CF(0) - the membrane proton channel. CF(1) has five subunits: alpha(3), beta(3), gamma(1), delta(1), epsilon(1). CF(0) has three main subunits: a(1), b(2) and c(9-12). The alpha and beta chains form an alternating ring which encloses part of the gamma chain. CF(1) is attached to CF(0) by a central stalk formed by the gamma and epsilon chains, while a peripheral stalk is formed by the delta and b chains.

The protein localises to the cell inner membrane. It carries out the reaction ATP + H2O + 4 H(+)(in) = ADP + phosphate + 5 H(+)(out). Functionally, produces ATP from ADP in the presence of a proton gradient across the membrane. The alpha chain is a regulatory subunit. This Dictyoglomus thermophilum (strain ATCC 35947 / DSM 3960 / H-6-12) protein is ATP synthase subunit alpha.